The primary structure comprises 379 residues: UDP-4-amino-4-deoxy-L-arabinose--oxoglutarate aminotransferase (379 aa).

K182 carries the post-translational modification N6-(pyridoxal phosphate)lysine.

The protein belongs to the DegT/DnrJ/EryC1 family. ArnB subfamily. As to quaternary structure, homodimer. It depends on pyridoxal 5'-phosphate as a cofactor.

It carries out the reaction UDP-4-amino-4-deoxy-beta-L-arabinose + 2-oxoglutarate = UDP-beta-L-threo-pentopyranos-4-ulose + L-glutamate. Its pathway is nucleotide-sugar biosynthesis; UDP-4-deoxy-4-formamido-beta-L-arabinose biosynthesis; UDP-4-deoxy-4-formamido-beta-L-arabinose from UDP-alpha-D-glucuronate: step 2/3. It functions in the pathway bacterial outer membrane biogenesis; lipopolysaccharide biosynthesis. Functionally, catalyzes the conversion of UDP-4-keto-arabinose (UDP-Ara4O) to UDP-4-amino-4-deoxy-L-arabinose (UDP-L-Ara4N). The modified arabinose is attached to lipid A and is required for resistance to polymyxin and cationic antimicrobial peptides. This is UDP-4-amino-4-deoxy-L-arabinose--oxoglutarate aminotransferase from Erwinia tasmaniensis (strain DSM 17950 / CFBP 7177 / CIP 109463 / NCPPB 4357 / Et1/99).